A 229-amino-acid polypeptide reads, in one-letter code: DNA mismatch repair protein MutH (229 aa).

The protein belongs to the MutH family.

The protein localises to the cytoplasm. In terms of biological role, sequence-specific endonuclease that cleaves unmethylated GATC sequences. It is involved in DNA mismatch repair. This is DNA mismatch repair protein MutH from Escherichia coli (strain SMS-3-5 / SECEC).